Reading from the N-terminus, the 258-residue chain is Thiazole synthase (258 aa).

Lys100 functions as the Schiff-base intermediate with DXP in the catalytic mechanism. 1-deoxy-D-xylulose 5-phosphate-binding positions include Gly161, 187–188 (AG), and 209–210 (NT).

The protein belongs to the ThiG family. As to quaternary structure, homotetramer. Forms heterodimers with either ThiH or ThiS.

Its subcellular location is the cytoplasm. It catalyses the reaction [ThiS sulfur-carrier protein]-C-terminal-Gly-aminoethanethioate + 2-iminoacetate + 1-deoxy-D-xylulose 5-phosphate = [ThiS sulfur-carrier protein]-C-terminal Gly-Gly + 2-[(2R,5Z)-2-carboxy-4-methylthiazol-5(2H)-ylidene]ethyl phosphate + 2 H2O + H(+). It participates in cofactor biosynthesis; thiamine diphosphate biosynthesis. Functionally, catalyzes the rearrangement of 1-deoxy-D-xylulose 5-phosphate (DXP) to produce the thiazole phosphate moiety of thiamine. Sulfur is provided by the thiocarboxylate moiety of the carrier protein ThiS. In vitro, sulfur can be provided by H(2)S. The protein is Thiazole synthase of Campylobacter jejuni subsp. jejuni serotype O:23/36 (strain 81-176).